The primary structure comprises 117 residues: Ig heavy chain V region 3 (117 aa).

Residues 1 to 19 form the signal peptide; that stretch reads MGWSCIILFLVATATGVHS. The segment at 20 to 49 is framework-1; it reads QVQLQQPGAELVRPGSSVKLSCKASGYTFT. Residues C41 and C115 are joined by a disulfide bond. The complementarity-determining-1 stretch occupies residues 50 to 54; sequence SYWMD. Residues 55-68 form a framework-2 region; it reads WVKQRPGQGLEWIG. Residues 69–85 are complementarity-determining-2; it reads NIYPSDSETHYNQKFKD. Positions 86-117 are framework-3; it reads KATLTVDKSSSTAYMQLSSLTSEDSAVYYCAR.

The sequence is that of Ig heavy chain V region 3 (Ighv1-61) from Mus musculus (Mouse).